We begin with the raw amino-acid sequence, 155 residues long: uncharacterized protein (155 aa).

This sequence belongs to the IIV-6 145L family.

This is an uncharacterized protein from Acheta domesticus (House cricket).